The chain runs to 203 residues: MACGATLKRTLDFDPLLSPASPKRRRCAPLSAPTSAAATPSSAAAATAASFSAAAASPQKYLRMEPSPFGDVSSRLTTEQILYNIKQEYKRMQKRRHLETSFQQTDPCCTSDAQPHAFLLSGPASPGTPSGTSSPLKKEQPLFTLRQVGMICERLLKEREEKVREEYEEILNTKLAEQYDAFVKFTHDQIMRRYGEQPASYVS.

Ser-18 and Ser-21 each carry phosphoserine. Residues 22 to 27 (PKRRRC) carry the Nuclear localization signal motif. Ser-57 bears the Phosphoserine mark. The interval 115-137 (PHAFLLSGPASPGTPSGTSSPLK) is disordered. The span at 119-135 (LLSGPASPGTPSGTSSP) shows a compositional bias: low complexity. The SYVS motif motif lies at 200–203 (SYVS).

It belongs to the akirin family. Homodimer. Interacts with IPO9; the interaction is direct. Associates with 20S and 26S proteasomes. Interacts with SMARCD1; promoting SWI/SNF complex recruitment. Interacts with NFKBIZ. Interacts with YWHAB. In terms of processing, polyubiquitinated. Polyubiquitination is dependent of UBR5 that extends pre-ubiquitinated AKIRIN2.

It is found in the nucleus. The protein resides in the cytoplasm. It localises to the membrane. Functionally, molecular adapter that acts as a bridge between a variety of multiprotein complexes, and which is involved in embryonic development, immunity, myogenesis and brain development. Plays a key role in nuclear protein degradation by promoting import of proteasomes into the nucleus: directly binds to fully assembled 20S proteasomes at one end and to nuclear import receptor IPO9 at the other end, bridging them together and mediating the import of pre-assembled proteasome complexes through the nuclear pore. Involved in innate immunity by regulating the production of interleukin-6 (IL6) downstream of Toll-like receptor (TLR): acts by bridging the NF-kappa-B inhibitor NFKBIZ and the SWI/SNF complex, leading to promote induction of IL6. Also involved in adaptive immunity by promoting B-cell activation. Involved in brain development: required for the survival and proliferation of cerebral cortical progenitor cells. Involved in myogenesis: required for skeletal muscle formation and skeletal development, possibly by regulating expression of muscle differentiation factors. The chain is Akirin-2 from Bos taurus (Bovine).